Here is a 428-residue protein sequence, read N- to C-terminus: Serine--tRNA ligase (428 aa).

231–233 provides a ligand contact to L-serine; sequence TSE. Residues 262–264 and Val-278 contribute to the ATP site; that span reads RRE. Glu-285 contributes to the L-serine binding site. 349–352 serves as a coordination point for ATP; it reads ELTS. L-serine is bound at residue Thr-384.

Belongs to the class-II aminoacyl-tRNA synthetase family. Type-1 seryl-tRNA synthetase subfamily. Homodimer. The tRNA molecule binds across the dimer.

It localises to the cytoplasm. The catalysed reaction is tRNA(Ser) + L-serine + ATP = L-seryl-tRNA(Ser) + AMP + diphosphate + H(+). It catalyses the reaction tRNA(Sec) + L-serine + ATP = L-seryl-tRNA(Sec) + AMP + diphosphate + H(+). It functions in the pathway aminoacyl-tRNA biosynthesis; selenocysteinyl-tRNA(Sec) biosynthesis; L-seryl-tRNA(Sec) from L-serine and tRNA(Sec): step 1/1. Its function is as follows. Catalyzes the attachment of serine to tRNA(Ser). Is also able to aminoacylate tRNA(Sec) with serine, to form the misacylated tRNA L-seryl-tRNA(Sec), which will be further converted into selenocysteinyl-tRNA(Sec). The polypeptide is Serine--tRNA ligase (Bifidobacterium adolescentis (strain ATCC 15703 / DSM 20083 / NCTC 11814 / E194a)).